Consider the following 317-residue polypeptide: MLQLCPLDEDTLYTHVYERYVELDRHAETLAQDLGIHASDAETLVVDIAPAQPTKSSDTYSLTVSQSLASLRSSTVNNNSTTGYVLWSGTPFFLCWLLYAPSAAPLRDGGRVPVTDSAAQFLQLPPLFSAPARPVCVVELGSGAAGVAAIVLANYVDRYLVSDQKAILKPLRANLLANISEVSRRTVCSKQTPELSSNRRTPARCELELIALDWERIATVPAALRPTDAAHVHVLALDVVYNDFLIPPLLTAIKRLLRWYADEHAVKATAYVLVHLRAQDILQTFLEHAIIDLRLRCYYMDEERLRSSRFALYYVTL.

S-adenosyl-L-methionine-binding positions include Trp87, 141-143, Asp163, Trp214, and Leu237; that span reads GSG.

Belongs to the class I-like SAM-binding methyltransferase superfamily. RKM5 family.

S-adenosyl-L-methionine-dependent protein-lysine N-methyltransferase that methylates 60S ribosomal protein L1. The polypeptide is Ribosomal lysine N-methyltransferase 5 (RKM5) (Eremothecium gossypii (strain ATCC 10895 / CBS 109.51 / FGSC 9923 / NRRL Y-1056) (Yeast)).